A 528-amino-acid chain; its full sequence is Apolipoprotein N-acyltransferase (528 aa).

5 helical membrane-spanning segments follow: residues 8–28 (IMLLAGWRRALLAIASGAVGA), 69–89 (AFWIGWLFGFGYFVAGLWWLG), 99–119 (FAWALPLAVLGLPAVLAVFYG), 178–198 (VLGLFGVSALAVFVFAAPALL), and 203–223 (GAKLGLALAGILFCGHLGYGA). The 250-residue stretch at 241–490 (VQPNIDQAAK…EGVENATFTL (250 aa)) folds into the CN hydrolase domain. The active-site Proton acceptor is the glutamate 285. The active site involves lysine 349. Cysteine 402 serves as the catalytic Nucleophile.

This sequence belongs to the CN hydrolase family. Apolipoprotein N-acyltransferase subfamily.

The protein localises to the cell inner membrane. It catalyses the reaction N-terminal S-1,2-diacyl-sn-glyceryl-L-cysteinyl-[lipoprotein] + a glycerophospholipid = N-acyl-S-1,2-diacyl-sn-glyceryl-L-cysteinyl-[lipoprotein] + a 2-acyl-sn-glycero-3-phospholipid + H(+). It functions in the pathway protein modification; lipoprotein biosynthesis (N-acyl transfer). Functionally, catalyzes the phospholipid dependent N-acylation of the N-terminal cysteine of apolipoprotein, the last step in lipoprotein maturation. This chain is Apolipoprotein N-acyltransferase, found in Allorhizobium ampelinum (strain ATCC BAA-846 / DSM 112012 / S4) (Agrobacterium vitis (strain S4)).